An 882-amino-acid polypeptide reads, in one-letter code: Valine--tRNA ligase (882 aa).

The short motif at Pro50 to His60 is the 'HIGH' region element. A 'KMSKS' region motif is present at residues Lys526 to Ser530. Lys529 contacts ATP. The stretch at Leu810–Glu881 forms a coiled coil.

The protein belongs to the class-I aminoacyl-tRNA synthetase family. ValS type 1 subfamily. As to quaternary structure, monomer.

It is found in the cytoplasm. The enzyme catalyses tRNA(Val) + L-valine + ATP = L-valyl-tRNA(Val) + AMP + diphosphate. Catalyzes the attachment of valine to tRNA(Val). As ValRS can inadvertently accommodate and process structurally similar amino acids such as threonine, to avoid such errors, it has a 'posttransfer' editing activity that hydrolyzes mischarged Thr-tRNA(Val) in a tRNA-dependent manner. The polypeptide is Valine--tRNA ligase (Listeria innocua serovar 6a (strain ATCC BAA-680 / CLIP 11262)).